The chain runs to 377 residues: tRNA-specific 2-thiouridylase MnmA (377 aa).

ATP is bound by residues 8 to 15 (GMSGGVDS) and methionine 34. The segment at 94–96 (NPD) is interaction with target base in tRNA. The active-site Nucleophile is the cysteine 99. A disulfide bridge links cysteine 99 with cysteine 201. Glycine 123 is a binding site for ATP. An interaction with tRNA region spans residues 151–153 (KDQ). The Cysteine persulfide intermediate role is filled by cysteine 201. Residues 315 to 316 (RY) are interaction with tRNA.

Belongs to the MnmA/TRMU family.

The protein resides in the cytoplasm. It catalyses the reaction S-sulfanyl-L-cysteinyl-[protein] + uridine(34) in tRNA + AH2 + ATP = 2-thiouridine(34) in tRNA + L-cysteinyl-[protein] + A + AMP + diphosphate + H(+). Its function is as follows. Catalyzes the 2-thiolation of uridine at the wobble position (U34) of tRNA, leading to the formation of s(2)U34. This is tRNA-specific 2-thiouridylase MnmA from Acinetobacter baumannii (strain ACICU).